The following is a 178-amino-acid chain: CASP-like protein 5A1 (178 aa).

The span at 1-11 (MFASRPAVHPV) shows a compositional bias: low complexity. Positions 1-25 (MFASRPAVHPVEAPPPPDPAEQPRG) are disordered. Residues 1 to 37 (MFASRPAVHPVEAPPPPDPAEQPRGVLMKDLPGMPGT) lie on the Cytoplasmic side of the membrane. The chain crosses the membrane as a helical span at residues 38–58 (AGGLGLRLAQFAFAAVALAVM). The Extracellular portion of the chain corresponds to 59–69 (ASTNDFPSVTS). Residues 70 to 90 (FCFLVAAAILQCLWSFSLAIV) traverse the membrane as a helical segment. At 91-105 (DIYALLVKRCLRNRR) the chain is on the cytoplasmic side. Residues 106–126 (AVCLFAIGDGITAALTFSAAC) traverse the membrane as a helical segment. Residues 127-152 (ASSGITVLIDNDLDLCSENHCASFES) lie on the Extracellular side of the membrane. A helical transmembrane segment spans residues 153 to 173 (ATAMAFLSWFALSPSFLLNFW). Topologically, residues 174–178 (SMASG) are cytoplasmic.

The protein belongs to the Casparian strip membrane proteins (CASP) family. Homodimer and heterodimers.

It localises to the cell membrane. This Oryza sativa subsp. japonica (Rice) protein is CASP-like protein 5A1.